Consider the following 215-residue polypeptide: Glutathione S-transferase D2 (215 aa).

The 80-residue stretch at M1–D80 folds into the GST N-terminal domain. Residues H50 to I52 and E64 to R66 each bind glutathione. The region spanning D86–L212 is the GST C-terminal domain.

This sequence belongs to the GST superfamily. Delta family. Homodimer.

The enzyme catalyses RX + glutathione = an S-substituted glutathione + a halide anion + H(+). Conjugation of reduced glutathione to a wide number of exogenous and endogenous hydrophobic electrophiles. May be involved in detoxification. The sequence is that of Glutathione S-transferase D2 from Drosophila melanogaster (Fruit fly).